Consider the following 871-residue polypeptide: Protein argonaute-2 (871 aa).

Positions 232–351 (PVIEFMCEVL…LPLEVCNIVA (120 aa)) constitute a PAZ domain. Interaction with guide RNA stretches follow at residues 314–319 (YFKDRH) and 536–578 (GKTP…LCLK). The Piwi domain maps to 529–830 (LVVVILPGKT…VAFRARYHLV (302 aa)). The segment at 599–602 (FQQP) is interaction with GW182 family members. Residue Asp-609 participates in a divalent metal cation binding. The interval 662–672 (LIQFYKSTRFK) is interaction with GW182 family members. An a divalent metal cation-binding site is contributed by Asp-681. 3 interaction with guide RNA regions span residues 721-722 (KR), 765-773 (HAGIQGTSR), and 802-824 (YVRC…VAFR). Position 819 (His-819) interacts with a divalent metal cation. The disordered stretch occupies residues 834 to 856 (HDSAEGSHTSGQSNGRDQQALAK). Positions 839–850 (GSHTSGQSNGRD) are enriched in polar residues.

This sequence belongs to the argonaute family. Ago subfamily. Component of the RISC loading complex (RLC), or micro-RNA (miRNA) loading complex (miRLC), which is composed of dicer1, ago2 and tarbp2. Note that the trimeric RLC/miRLC is also referred to as RISC. It depends on Mg(2+) as a cofactor. Requires Mn(2+) as cofactor.

It is found in the cytoplasm. The protein resides in the P-body. It catalyses the reaction Endonucleolytic cleavage to 5'-phosphomonoester.. Functionally, required for RNA-mediated gene silencing (RNAi) by the RNA-induced silencing complex (RISC). The 'minimal RISC' appears to include ago2 bound to a short guide RNA such as a microRNA (miRNA) or short interfering RNA (siRNA). These guide RNAs direct RISC to complementary mRNAs that are targets for RISC-mediated gene silencing. The precise mechanism of gene silencing depends on the degree of complementarity between the miRNA or siRNA and its target. Binding of RISC to a perfectly complementary mRNA generally results in silencing due to endonucleolytic cleavage of the mRNA specifically by ago2. Binding of RISC to a partially complementary mRNA results in silencing through inhibition of translation, and this is independent of endonuclease activity. The inhibition of translational initiation leads to the accumulation of the affected mRNA in cytoplasmic processing bodies (P-bodies), where mRNA degradation may subsequently occur. This Xenopus tropicalis (Western clawed frog) protein is Protein argonaute-2 (ago2).